The sequence spans 43 residues: Mu-conotoxin-like CalTx 12.2.1E (43 aa).

A propeptide is located at residue arginine 1. Cystine bridges form between cysteine 4-cysteine 16, cysteine 11-cysteine 24, cysteine 18-cysteine 29, and cysteine 23-cysteine 35. A 6'-bromotryptophan modification is found at tryptophan 31. Residue proline 36 is modified to 4-hydroxyproline. Position 40 is a 6'-bromotryptophan (tryptophan 40).

In terms of tissue distribution, expressed by the venom duct.

The protein localises to the secreted. Mu-conotoxins block voltage-gated sodium channels. This toxin reversibly blocks voltage-gated sodium channel in cephalopods, with no alteration in the voltage dependence of sodium conductance or on the kinetics of inactivation. The polypeptide is Mu-conotoxin-like CalTx 12.2.1E (Californiconus californicus (California cone)).